A 620-amino-acid polypeptide reads, in one-letter code: 1-deoxy-D-xylulose-5-phosphate synthase (620 aa).

Thiamine diphosphate contacts are provided by residues His80 and 121-123 (GHS). Mg(2+) is bound at residue Asp152. Thiamine diphosphate is bound by residues 153–154 (GA), Asn181, Tyr288, and Glu370. Asn181 contributes to the Mg(2+) binding site.

The protein belongs to the transketolase family. DXPS subfamily. Homodimer. Mg(2+) is required as a cofactor. It depends on thiamine diphosphate as a cofactor.

The enzyme catalyses D-glyceraldehyde 3-phosphate + pyruvate + H(+) = 1-deoxy-D-xylulose 5-phosphate + CO2. The protein operates within metabolic intermediate biosynthesis; 1-deoxy-D-xylulose 5-phosphate biosynthesis; 1-deoxy-D-xylulose 5-phosphate from D-glyceraldehyde 3-phosphate and pyruvate: step 1/1. Functionally, catalyzes the acyloin condensation reaction between C atoms 2 and 3 of pyruvate and glyceraldehyde 3-phosphate to yield 1-deoxy-D-xylulose-5-phosphate (DXP). The sequence is that of 1-deoxy-D-xylulose-5-phosphate synthase from Escherichia coli O6:K15:H31 (strain 536 / UPEC).